Here is a 248-residue protein sequence, read N- to C-terminus: Ubiquinone biosynthesis O-methyltransferase (248 aa).

4 residues coordinate S-adenosyl-L-methionine: arginine 40, glycine 71, aspartate 92, and methionine 135.

This sequence belongs to the methyltransferase superfamily. UbiG/COQ3 family.

It carries out the reaction a 3-demethylubiquinol + S-adenosyl-L-methionine = a ubiquinol + S-adenosyl-L-homocysteine + H(+). The enzyme catalyses a 3-(all-trans-polyprenyl)benzene-1,2-diol + S-adenosyl-L-methionine = a 2-methoxy-6-(all-trans-polyprenyl)phenol + S-adenosyl-L-homocysteine + H(+). It participates in cofactor biosynthesis; ubiquinone biosynthesis. O-methyltransferase that catalyzes the 2 O-methylation steps in the ubiquinone biosynthetic pathway. In Ruegeria pomeroyi (strain ATCC 700808 / DSM 15171 / DSS-3) (Silicibacter pomeroyi), this protein is Ubiquinone biosynthesis O-methyltransferase.